The sequence spans 671 residues: MDESLTPNPKQKPASTTTRIQAPTSPFFLGSNDDRLEREQARAARAAASRRRSVIFARGSQPETESDPCFDKQQILELFQNCIKLASENKINQKNTWELNLIDHLCEIIKVEDENNTETNFQKASCTLEAGVKIYSMRVDSVHSEAYKVLGGITRAGHDDGGDHEDAAGAVENATNQKKQPEKKISPLSTLEPSFDALNVKKFDVAFAVDPLYHQTSAQFDEGGAKGLLLNNLGVYGGCQVLFDSQEIPGKLVSSANKHDKSETIDLSFVKECVEQMVLNMRKKDEIVPSLRAIINQFDEENQRPSDTFSCGQQTTESFDISHGNDASYADDDEGYENFGTSFDYEGQSGDVDENFGPNEAEPIYSNFHEEVEPASLQDMDSDDRLENVDDYLFLSLGISSKQNSWAGPDHWKYRKTKGPDVQPASEIKSSPPAKKTRKKKQAEPELDFAKALEEEMPDIFAPPKNPKTLLLPASRTPCQTKLPEDCHYQPENLIKLFLLPNVMCLGRRRRKNSGETSRQQPDDYEHGESWGNDNVYDDDDGPFDDNENDQSDAEDTNTLISQPRQVNKIDVQYDKASKQVDVQVLKETLWECLQESHQPPIQDEEHQQEPPESRSFKVLLASFPDDCQAAERTQDISPHLCFICLLHLANEHNLSLIGSQNLDDLTIHLA.

Positions 1 to 24 are enriched in polar residues; that stretch reads MDESLTPNPKQKPASTTTRIQAPT. Disordered regions lie at residues 1–33, 404–444, and 510–564; these read MDESLTPNPKQKPASTTTRIQAPTSPFFLGSND, NSWA…KQAE, and RRKN…ISQP. The Kleisin-gamma middle domain (GM domain) involved in chromosome-binding motif lies at 406–415; that stretch reads WAGPDHWKYR. Acidic residues predominate over residues 536-556; it reads VYDDDDGPFDDNENDQSDAED.

It belongs to the CND2 (condensin subunit 2) family. In terms of assembly, component of the condensin complex. As to expression, mostly expressed in flower buds and flowers, and, to a lower extent, in roots, stems, leaves and seedlings.

Its subcellular location is the cytoplasm. The protein localises to the chromosome. Functionally, regulatory subunit of the condensin complex, a complex required for conversion of interphase chromatin into mitotic-like condense chromosomes. The condensin complex probably introduces positive supercoils into relaxed DNA in the presence of type I topoisomerases and converts nicked DNA into positive knotted forms in the presence of type II topoisomerases. Essential protein. The polypeptide is Condensin complex subunit 2 (CAPH) (Arabidopsis thaliana (Mouse-ear cress)).